Consider the following 411-residue polypeptide: Meiotic driver wtf33 (411 aa).

The segment at 1–95 (MKNKYYPLRS…ENHSSGTADN (95 aa)) is disordered. The span at 11-29 (SMDELSTKNDNEIDLEKGP) shows a compositional bias: basic and acidic residues. The span at 57-72 (GANNPNLFNTDESTTP) shows a compositional bias: polar residues. The next 6 helical transmembrane spans lie at 104-124 (AILSFIPIFVLNVSAVCYLTY), 137-157 (WVYFGMWCASCLMILISLWCF), 244-264 (EMMIIIWILWLIICCILFGCV), 281-301 (TISAVLFLIVSSVCIPIWTLW), 303-323 (ALSGMLQVLGIHGIIAVLVNG), and 336-356 (GYEIEGFVLFFTSSALFLYEM).

Belongs to the WTF family. Homomer. Forms protein aggregates. The two isoforms can interact with each other and with themselves. High sequence similarity is required for their interaction.

The protein localises to the spore membrane. The protein resides in the vacuole membrane. Its subcellular location is the ascus epiplasm. It is found in the cytoplasm. It localises to the endoplasmic reticulum membrane. Functionally, promotes unequal transmission of alleles from the parental zygote to progeny spores by acting as poison/antidote system where the poison and antidote proteins are produced from the same locus; the poison component is trans-acting and targets all spores within an ascus whereas the antidote component is spore-specific, leading to poisoning of all progeny that do not inherit the allele. In terms of biological role, localizes isoform 2 to the vacuole thereby facilitating its degradation. Its function is as follows. Forms toxic aggregates that disrupt spore maturation. The chain is Meiotic driver wtf33 from Schizosaccharomyces kambucha (Fission yeast).